Reading from the N-terminus, the 262-residue chain is Tryptophan synthase alpha chain (262 aa).

Catalysis depends on proton acceptor residues E51 and D62.

The protein belongs to the TrpA family. Tetramer of two alpha and two beta chains.

It carries out the reaction (1S,2R)-1-C-(indol-3-yl)glycerol 3-phosphate + L-serine = D-glyceraldehyde 3-phosphate + L-tryptophan + H2O. Its pathway is amino-acid biosynthesis; L-tryptophan biosynthesis; L-tryptophan from chorismate: step 5/5. In terms of biological role, the alpha subunit is responsible for the aldol cleavage of indoleglycerol phosphate to indole and glyceraldehyde 3-phosphate. This Oceanobacillus iheyensis (strain DSM 14371 / CIP 107618 / JCM 11309 / KCTC 3954 / HTE831) protein is Tryptophan synthase alpha chain.